We begin with the raw amino-acid sequence, 228 residues long: Adapter protein MecA (228 aa).

This sequence belongs to the MecA family. As to quaternary structure, homodimer.

Functionally, enables the recognition and targeting of unfolded and aggregated proteins to the ClpC protease or to other proteins involved in proteolysis. In Lacticaseibacillus paracasei (strain ATCC 334 / BCRC 17002 / CCUG 31169 / CIP 107868 / KCTC 3260 / NRRL B-441) (Lactobacillus paracasei), this protein is Adapter protein MecA.